The primary structure comprises 175 residues: 6,7-dimethyl-8-ribityllumazine synthase (175 aa).

Residues Phe24, 58–60 (ALE), and 82–84 (AVI) contribute to the 5-amino-6-(D-ribitylamino)uracil site. 87 to 88 (ET) serves as a coordination point for (2S)-2-hydroxy-3-oxobutyl phosphate. The active-site Proton donor is His90. Residue Asn115 coordinates 5-amino-6-(D-ribitylamino)uracil. Arg129 lines the (2S)-2-hydroxy-3-oxobutyl phosphate pocket. The interval 150-175 (ALEPEEDDEDEDDEDEDFDDEEDDGR) is disordered. The span at 152-175 (EPEEDDEDEDDEDEDFDDEEDDGR) shows a compositional bias: acidic residues.

Belongs to the DMRL synthase family.

The enzyme catalyses (2S)-2-hydroxy-3-oxobutyl phosphate + 5-amino-6-(D-ribitylamino)uracil = 6,7-dimethyl-8-(1-D-ribityl)lumazine + phosphate + 2 H2O + H(+). Its pathway is cofactor biosynthesis; riboflavin biosynthesis; riboflavin from 2-hydroxy-3-oxobutyl phosphate and 5-amino-6-(D-ribitylamino)uracil: step 1/2. Its function is as follows. Catalyzes the formation of 6,7-dimethyl-8-ribityllumazine by condensation of 5-amino-6-(D-ribitylamino)uracil with 3,4-dihydroxy-2-butanone 4-phosphate. This is the penultimate step in the biosynthesis of riboflavin. The polypeptide is 6,7-dimethyl-8-ribityllumazine synthase (Bordetella bronchiseptica (strain ATCC BAA-588 / NCTC 13252 / RB50) (Alcaligenes bronchisepticus)).